The sequence spans 474 residues: 3-isopropylmalate dehydratase large subunit (474 aa).

3 residues coordinate [4Fe-4S] cluster: C352, C413, and C416.

This sequence belongs to the aconitase/IPM isomerase family. LeuC type 1 subfamily. Heterodimer of LeuC and LeuD. Requires [4Fe-4S] cluster as cofactor.

The catalysed reaction is (2R,3S)-3-isopropylmalate = (2S)-2-isopropylmalate. The protein operates within amino-acid biosynthesis; L-leucine biosynthesis; L-leucine from 3-methyl-2-oxobutanoate: step 2/4. In terms of biological role, catalyzes the isomerization between 2-isopropylmalate and 3-isopropylmalate, via the formation of 2-isopropylmaleate. The polypeptide is 3-isopropylmalate dehydratase large subunit (Pseudomonas syringae pv. syringae (strain B728a)).